The chain runs to 228 residues: Protein LIAT1 (228 aa).

The tract at residues 1-108 (MAGRGGTGAA…RAEPRDKEEN (108 aa)) is disordered. A compositionally biased stretch (acidic residues) spans 12–24 (YGEEGEEEEEEEA). Positions 49–71 (KRKVKKKKKKKKTKGSGKGDADK) are lysine-rich domain. The span at 50-63 (RKVKKKKKKKKTKG) shows a compositional bias: basic residues. Residues 90-108 (LNPHKDHGLRAEPRDKEEN) are compositionally biased toward basic and acidic residues. The interval 113–165 (PYSYSINHPCFAEIEDTLSSQINESLRWDGILTDPEAEKERIRIYKLNRRKRY) is interaction with ATE1. Repeat unit 1 spans residues 169 to 178 (ALKCFHSDPC).

As to quaternary structure, self-associates (via Lys-rich domain); targets LIAT1 to the nucleolus. Interacts with ATE1; it is not a substrate of ATE1, the interaction takes place in the cytoplasm and seems to increase ATE1 arginyltransferase activity. Interacts with JMJD6 and MRPS14. Post-translationally, post-translationally modified by JMJD6 lysyl-hydroxylase activity at its Lys-rich domain, which inhibits its self-association and nucleolar localization. Highly expressed in spleen, thymus, liver and brown adipose tissue. Moderately expressed in liver, testis and lung.

It localises to the nucleus. It is found in the nucleolus. Its subcellular location is the cytoplasm. In terms of biological role, participates in nucleolar liquid-liquid phase separation (LLPS) through its N-terminal intrinsically disordered region (IDR). May be involved in ATE1-mediated N-terminal arginylation. This chain is Protein LIAT1, found in Mus musculus (Mouse).